A 93-amino-acid polypeptide reads, in one-letter code: Phosphoribosyl-ATP pyrophosphatase (93 aa).

The protein belongs to the PRA-PH family.

The protein resides in the cytoplasm. It catalyses the reaction 1-(5-phospho-beta-D-ribosyl)-ATP + H2O = 1-(5-phospho-beta-D-ribosyl)-5'-AMP + diphosphate + H(+). It participates in amino-acid biosynthesis; L-histidine biosynthesis; L-histidine from 5-phospho-alpha-D-ribose 1-diphosphate: step 2/9. The chain is Phosphoribosyl-ATP pyrophosphatase from Rhodococcus erythropolis (strain PR4 / NBRC 100887).